A 55-amino-acid polypeptide reads, in one-letter code: MKIIVFLAVLMLVSAQVCLVSAAEMEHSSDNELSSRDLVKRFFLPPCAHKGTCNH.

The N-terminal stretch at 1-15 (MKIIVFLAVLMLVSA) is a signal peptide. The propeptide occupies 16–41 (QVCLVSAAEMEHSSDNELSSRDLVKR). Cysteine 47 and cysteine 53 form a disulfide bridge. The propeptide occupies 54 to 55 (NH).

As to expression, expressed by the skin glands.

It localises to the secreted. In Crinia riparia (Streambank froglet), this protein is Riparin-1.5 acid.